Here is a 64-residue protein sequence, read N- to C-terminus: Large ribosomal subunit protein bL35 (64 aa).

It belongs to the bacterial ribosomal protein bL35 family.

The chain is Large ribosomal subunit protein bL35 from Shewanella oneidensis (strain ATCC 700550 / JCM 31522 / CIP 106686 / LMG 19005 / NCIMB 14063 / MR-1).